The primary structure comprises 415 residues: Mannosylglycerate hydrolase (415 aa).

Residues Tyr-23, 27–30 (WLWD), Tyr-76, Gln-98, and Gly-158 each bind substrate. The Proton donor role is filled by Asp-160. Residues Arg-193 and 344–345 (YW) each bind substrate. The active-site Proton acceptor is Glu-388.

This sequence belongs to the glycosyl hydrolase 63 family. As to quaternary structure, homotetramer in solution.

The enzyme catalyses (2R)-2-O-(alpha-D-mannosyl)-glycerate + H2O = D-mannose + (R)-glycerate. The catalysed reaction is (2R)-2-O-(alpha-D-glucopyranosyl)-glycerate + H2O = (R)-glycerate + D-glucose. Activity is not stimulated by divalent cations and not affected in the presence of EDTA. Hydrolase that catalyzes the hydrolysis of mannosylglycerate (MG), a solute produced in response to osmotic stress in thermophiles, into mannose and glycerate. Can also hydrolyze glucosylglycerate (GG) to glucose and glycerate, with similar catalytic efficiency. Is highly specific for MG and GG, and cannot use mannosylglyceramide (MGA), glucosylglycerol, mannosylglucosylglycerate (MGG), glucosylglucosylglycerate (GGG) or trehalose as substrates. This Thermus thermophilus (strain ATCC BAA-163 / DSM 7039 / HB27) protein is Mannosylglycerate hydrolase.